Here is a 49-residue protein sequence, read N- to C-terminus: Putative DNA-directed RNA polymerase subunit omega (49 aa).

It belongs to the RNA polymerase subunit omega family.

The protein localises to the plastid. It is found in the chloroplast. The enzyme catalyses RNA(n) + a ribonucleoside 5'-triphosphate = RNA(n+1) + diphosphate. May be involved in RNA polymerase activity. This Cyanidioschyzon merolae (strain NIES-3377 / 10D) (Unicellular red alga) protein is Putative DNA-directed RNA polymerase subunit omega (rpoZ).